The chain runs to 345 residues: Platelet-derived growth factor C (345 aa).

An N-terminal signal peptide occupies residues 1-22 (MLLLGLLLLTSALAGQRTGTRA). The segment covering 24 to 33 (SNLSSKLQLS) has biased composition (polar residues). Residues 24–45 (SNLSSKLQLSSDKEQNGVQDPR) form a disordered region. N-linked (GlcNAc...) asparagine glycosylation occurs at asparagine 25. Basic and acidic residues predominate over residues 34 to 45 (SDKEQNGVQDPR). The region spanning 46 to 163 (HERVVTISGN…PGFCIHYSII (118 aa)) is the CUB domain. A glycan (N-linked (GlcNAc...) asparagine) is linked at asparagine 55. Cystine bridges form between cysteine 104–cysteine 124, cysteine 250–cysteine 294, cysteine 280–cysteine 335, and cysteine 287–cysteine 337.

This sequence belongs to the PDGF/VEGF growth factor family. In terms of assembly, homodimer; disulfide-linked. Interacts with PDGFRA homodimers, and with heterodimers formed by PDGFRA and PDGFRB. Interacts (via CUB domain) with PLAT (via kringle domain). In terms of processing, proteolytic removal of the N-terminal CUB domain releasing the core domain is necessary for unmasking the receptor-binding epitopes of the core domain. Cleavage after basic residues in the hinge region (region connecting the CUB and growth factor domains) gives rise to the receptor-binding form. Cleaved by PLAT and PLG. Sumoylated with SUMO1. Post-translationally, N-glycosylated. In terms of tissue distribution, highly expressed in the kidney and adrenal gland. In the kidney, it is expressed in arteriolar smooth muscle cells and in epithelial cells of individual segments (at protein level).

It is found in the cytoplasm. The protein localises to the cytosol. The protein resides in the secreted. Its subcellular location is the nucleus. It localises to the cytoplasmic granule. It is found in the cell membrane. In terms of biological role, growth factor that plays an essential role in the regulation of embryonic development, cell proliferation, cell migration, survival and chemotaxis. Potent mitogen and chemoattractant for cells of mesenchymal origin. Required for normal skeleton formation during embryonic development, especially for normal development of the craniofacial skeleton and for normal development of the palate. Required for normal skin morphogenesis during embryonic development. Plays an important role in wound healing, where it appears to be involved in three stages: inflammation, proliferation and remodeling. Plays an important role in angiogenesis and blood vessel development. Involved in fibrotic processes, in which transformation of interstitial fibroblasts into myofibroblasts plus collagen deposition occurs. The CUB domain has mitogenic activity in coronary artery smooth muscle cells, suggesting a role beyond the maintenance of the latency of the PDGF domain. In the nucleus, PDGFC seems to have additional function. The protein is Platelet-derived growth factor C (Pdgfc) of Rattus norvegicus (Rat).